A 236-amino-acid chain; its full sequence is Phosphoribosylaminoimidazole-succinocarboxamide synthase (236 aa).

This sequence belongs to the SAICAR synthetase family.

The enzyme catalyses 5-amino-1-(5-phospho-D-ribosyl)imidazole-4-carboxylate + L-aspartate + ATP = (2S)-2-[5-amino-1-(5-phospho-beta-D-ribosyl)imidazole-4-carboxamido]succinate + ADP + phosphate + 2 H(+). It functions in the pathway purine metabolism; IMP biosynthesis via de novo pathway; 5-amino-1-(5-phospho-D-ribosyl)imidazole-4-carboxamide from 5-amino-1-(5-phospho-D-ribosyl)imidazole-4-carboxylate: step 1/2. In Pseudomonas syringae pv. syringae (strain B728a), this protein is Phosphoribosylaminoimidazole-succinocarboxamide synthase.